A 423-amino-acid chain; its full sequence is Transcription factor AP-2-epsilon (423 aa).

The disordered stretch occupies residues 1 to 108 (MLVHSYSSME…EDAGLLSQPH (108 aa)). The segment covering 14–27 (GLSSSSPGGRLSQL) has biased composition (low complexity). The PPxY motif motif lies at 50–55 (YFPPPY). Over residues 57–70 (QSSLSYSQSQDGGY) the composition is skewed to low complexity. The span at 79–93 (SLNSLHQHQQAAWHS) shows a compositional bias: polar residues. The segment at 276–405 (RRKAANVTLL…YLLEALKLLD (130 aa)) is H-S-H (helix-span-helix), dimerization.

The protein belongs to the AP-2 family. Binds DNA as a dimer. Can form homodimers or heterodimers with other AP-2 family members.

The protein resides in the nucleus. Its function is as follows. Sequence-specific DNA-binding protein that interacts with inducible viral and cellular enhancer elements to regulate transcription of selected genes. AP-2 factors bind to the consensus sequence 5'-GCCNNNGGC-3' and activate genes involved in a large spectrum of important biological functions. The protein is Transcription factor AP-2-epsilon of Danio rerio (Zebrafish).